The following is a 274-amino-acid chain: MYRIIAADLDGTLLSPENKITKYTEKIIKFLIEKGFYFVFASGRHYIDIMKIRDTLNIKVFMITSNGAQVYDLNNVLIFENHLDEEIALKLCKMKYLDADIITQVYRNNQWYINNNKIDNNFCPTLSSLRYKYFCPDVFNFKKVSKVFFTSHNLKKLHTLQKDIISFLGNRVNVHFSVPGCLEVVSGEVSKGYGLKLISNILGISLKECITFGDGMNDQDMLSISGKACIMENADSSLKKNLPYAEVIGSNKNDGVAVFLNKNFIKNNKFIKCF.

Asp8 functions as the Nucleophile in the catalytic mechanism. Residue Asp8 coordinates Mg(2+). A phosphate-binding site is contributed by Leu9. Asp10 is a binding site for Mg(2+). Phosphate is bound by residues 42–43 and Lys191; that span reads SG. Asp214 is a Mg(2+) binding site. Residue Asn217 participates in phosphate binding.

It belongs to the HAD-like hydrolase superfamily. Cof family. Mg(2+) is required as a cofactor.

The polypeptide is Putative phosphatase BUsg_029 (Buchnera aphidicola subsp. Schizaphis graminum (strain Sg)).